Reading from the N-terminus, the 278-residue chain is Large ribosomal subunit protein uL2 (278 aa).

The segment at 223–278 (GVAMNPIDHPHGGGEGRTSGGRHPVTPWGFPTKGKKTRSNKRTDTFIVSSRHNRKK) is disordered.

The protein belongs to the universal ribosomal protein uL2 family. As to quaternary structure, part of the 50S ribosomal subunit. Forms a bridge to the 30S subunit in the 70S ribosome.

One of the primary rRNA binding proteins. Required for association of the 30S and 50S subunits to form the 70S ribosome, for tRNA binding and peptide bond formation. It has been suggested to have peptidyltransferase activity; this is somewhat controversial. Makes several contacts with the 16S rRNA in the 70S ribosome. This chain is Large ribosomal subunit protein uL2, found in Methylobacterium nodulans (strain LMG 21967 / CNCM I-2342 / ORS 2060).